The sequence spans 254 residues: 5'/3'-nucleotidase SurE (254 aa).

Positions 9, 10, 40, and 93 each coordinate a divalent metal cation.

Belongs to the SurE nucleotidase family. A divalent metal cation is required as a cofactor.

It localises to the cytoplasm. It carries out the reaction a ribonucleoside 5'-phosphate + H2O = a ribonucleoside + phosphate. The catalysed reaction is a ribonucleoside 3'-phosphate + H2O = a ribonucleoside + phosphate. It catalyses the reaction [phosphate](n) + H2O = [phosphate](n-1) + phosphate + H(+). Its function is as follows. Nucleotidase with a broad substrate specificity as it can dephosphorylate various ribo- and deoxyribonucleoside 5'-monophosphates and ribonucleoside 3'-monophosphates with highest affinity to 3'-AMP. Also hydrolyzes polyphosphate (exopolyphosphatase activity) with the preference for short-chain-length substrates (P20-25). Might be involved in the regulation of dNTP and NTP pools, and in the turnover of 3'-mononucleotides produced by numerous intracellular RNases (T1, T2, and F) during the degradation of various RNAs. In Photorhabdus laumondii subsp. laumondii (strain DSM 15139 / CIP 105565 / TT01) (Photorhabdus luminescens subsp. laumondii), this protein is 5'/3'-nucleotidase SurE.